A 221-amino-acid polypeptide reads, in one-letter code: Small ribosomal subunit protein uS2c (221 aa).

This sequence belongs to the universal ribosomal protein uS2 family.

It is found in the plastid. The protein resides in the chloroplast. The protein is Small ribosomal subunit protein uS2c (rps2) of Cyanidioschyzon merolae (strain NIES-3377 / 10D) (Unicellular red alga).